We begin with the raw amino-acid sequence, 331 residues long: 6-phosphogluconolactonase (331 aa).

It belongs to the cycloisomerase 2 family.

It catalyses the reaction 6-phospho-D-glucono-1,5-lactone + H2O = 6-phospho-D-gluconate + H(+). Its pathway is carbohydrate degradation; pentose phosphate pathway; D-ribulose 5-phosphate from D-glucose 6-phosphate (oxidative stage): step 2/3. Functionally, catalyzes the hydrolysis of 6-phosphogluconolactone to 6-phosphogluconate. In Citrobacter koseri (strain ATCC BAA-895 / CDC 4225-83 / SGSC4696), this protein is 6-phosphogluconolactonase.